The primary structure comprises 166 residues: Large ribosomal subunit protein uL10 (166 aa).

This sequence belongs to the universal ribosomal protein uL10 family. Part of the ribosomal stalk of the 50S ribosomal subunit. The N-terminus interacts with L11 and the large rRNA to form the base of the stalk. The C-terminus forms an elongated spine to which L12 dimers bind in a sequential fashion forming a multimeric L10(L12)X complex.

Forms part of the ribosomal stalk, playing a central role in the interaction of the ribosome with GTP-bound translation factors. This is Large ribosomal subunit protein uL10 from Geobacillus sp. (strain WCH70).